The chain runs to 672 residues: Flap endonuclease 1 (672 aa).

Residues 1-106 (MGIKGLIGFL…QTLAKRKLLR (106 aa)) are N-domain. Asp-34 provides a ligand contact to Mg(2+). Arg-47 and Arg-72 together coordinate DNA. Residues Asp-88, Glu-160, Glu-162, Asp-181, and Asp-183 each coordinate Mg(2+). The interval 124-252 (AIRKYVGRTV…KTAYNLIKKH (129 aa)) is I-domain. Residue Glu-160 coordinates DNA. Gly-230 and Asp-232 together coordinate DNA. Asp-232 is a binding site for Mg(2+). Positions 327 to 335 (TQLSLKSFF) are interaction with PCNA. Positions 361–436 (VESAVDSTSD…DAKKRNKRVP (76 aa)) are disordered. Residues 370-382 (DDGKDEVPSDDKV) show a composition bias toward basic and acidic residues.

This sequence belongs to the XPG/RAD2 endonuclease family. FEN1 subfamily. Interacts with PCNA. Three molecules of FEN1 bind to one PCNA trimer with each molecule binding to one PCNA monomer. PCNA stimulates the nuclease activity without altering cleavage specificity. It depends on Mg(2+) as a cofactor. In terms of processing, phosphorylated. Phosphorylation upon DNA damage induces relocalization to the nuclear plasma.

It localises to the nucleus. Its subcellular location is the nucleolus. The protein localises to the nucleoplasm. It is found in the mitochondrion. Functionally, structure-specific nuclease with 5'-flap endonuclease and 5'-3' exonuclease activities involved in DNA replication and repair. During DNA replication, cleaves the 5'-overhanging flap structure that is generated by displacement synthesis when DNA polymerase encounters the 5'-end of a downstream Okazaki fragment. It enters the flap from the 5'-end and then tracks to cleave the flap base, leaving a nick for ligation. Also involved in the long patch base excision repair (LP-BER) pathway, by cleaving within the apurinic/apyrimidinic (AP) site-terminated flap. Acts as a genome stabilization factor that prevents flaps from equilibrating into structures that lead to duplications and deletions. Also possesses 5'-3' exonuclease activity on nicked or gapped double-stranded DNA, and exhibits RNase H activity. Also involved in replication and repair of rDNA and in repairing mitochondrial DNA. This chain is Flap endonuclease 1, found in Babesia bovis.